The following is a 345-amino-acid chain: NADPH dehydrogenase (345 aa).

23-26 (SPMC) is an FMN binding site. Residue Tyr28 coordinates substrate. FMN is bound by residues Ala60 and Gln102. 164 to 167 (HGAH) serves as a coordination point for substrate. FMN contacts are provided by residues Arg215 and 307 to 308 (GR).

The protein belongs to the NADH:flavin oxidoreductase/NADH oxidase family. NamA subfamily. In terms of assembly, homotetramer. The cofactor is FMN.

It catalyses the reaction A + NADPH + H(+) = AH2 + NADP(+). In terms of biological role, catalyzes the reduction of the double bond of an array of alpha,beta-unsaturated aldehydes and ketones. It also reduces the nitro group of nitroester and nitroaromatic compounds. It could have a role in detoxification processes. This chain is NADPH dehydrogenase, found in Bacillus thuringiensis subsp. konkukian (strain 97-27).